Here is a 116-residue protein sequence, read N- to C-terminus: Putative anti-sigma factor antagonist BtrV (116 aa).

In terms of domain architecture, STAS spans 1 to 110; it reads MKLTMDKIDG…NSREAAAAAF (110 aa). Residue serine 55 is modified to Phosphoserine; by BtrW.

The protein belongs to the anti-sigma-factor antagonist family. Interacts with BtrW. Post-translationally, phosphorylated by BtrW. Dephosphorylated by BtrU.

Possible positive regulator of sigma-B activity. Non-phosphorylated BtrV binds to BtrW, preventing its association with an unknown partner(s) that might be sigma-B. When phosphorylated, releases BtrW, which is then free to complex with and inactivate its partner. Involved in type III secretion system (T3SS). This chain is Putative anti-sigma factor antagonist BtrV (btrV), found in Bordetella bronchiseptica (strain ATCC BAA-588 / NCTC 13252 / RB50) (Alcaligenes bronchisepticus).